The following is a 923-amino-acid chain: Hexokinase-3 (923 aa).

The span at Met1–Cys18 shows a compositional bias: polar residues. Positions Met1 to Ser30 are disordered. Hexokinase domains lie at Ser27–Ala471 and Ala477–Ala912. Positions His84 to Val220 are hexokinase small subdomain 1. Glu95 to Ser102 lines the ATP pocket. Glu95–Arg104 lines the D-glucose 6-phosphate pocket. D-glucose-binding positions include Ser168, Thr185 to Lys186, and Asn221 to Asp222. The interval Asn221–Asp460 is hexokinase large subdomain 1. Residues Asp222 and Thr245 each coordinate D-glucose 6-phosphate. D-glucose is bound by residues Asn248, Glu273, and Gln304 to Glu307. Gly426–Arg428 contacts D-glucose 6-phosphate. Residues Ser438–Val439 and Asp542–Asn547 contribute to the ATP site. A hexokinase small subdomain 2 region spans residues Asp531–Val661. D-glucose 6-phosphate is bound at residue Asp542–Thr546. Residues Ser609–Phe610, Thr626–Lys627, and Asn662–Asp663 each bind D-glucose. Residues Asn662 to Asp901 form a hexokinase large subdomain 2 region. D-glucose 6-phosphate is bound by residues Asp663 and Thr686. Thr686 provides a ligand contact to ATP. D-glucose is bound by residues Thr688–Asn689, Glu714, and Glu748. Residues Gly753–Met754, Thr790–Ser794, and Thr869–Leu873 contribute to the ATP site. Residues Asp867–Thr869 and Ser903 each bind D-glucose 6-phosphate.

It belongs to the hexokinase family.

The enzyme catalyses a D-hexose + ATP = a D-hexose 6-phosphate + ADP + H(+). The catalysed reaction is D-fructose + ATP = D-fructose 6-phosphate + ADP + H(+). It carries out the reaction D-glucose + ATP = D-glucose 6-phosphate + ADP + H(+). Its pathway is carbohydrate metabolism; hexose metabolism. The protein operates within carbohydrate degradation; glycolysis; D-glyceraldehyde 3-phosphate and glycerone phosphate from D-glucose: step 1/4. Hexokinase is an allosteric enzyme inhibited by its product D-glucose 6-phosphate. In terms of biological role, catalyzes the phosphorylation of hexose, such as D-glucose and D-fructose, to hexose 6-phosphate (D-glucose 6-phosphate and D-fructose 6-phosphate, respectively). Mediates the initial step of glycolysis by catalyzing phosphorylation of D-glucose to D-glucose 6-phosphate. The protein is Hexokinase-3 of Homo sapiens (Human).